The sequence spans 284 residues: Ribosome-associated protein oga1 (284 aa).

Positions 1–284 (MSVASKNLFD…LSETDFPALA (284 aa)) are disordered. Basic and acidic residues predominate over residues 22–36 (TEKKTAASRDKKRSD). 2 positions are modified to phosphoserine: serine 37 and serine 51. Composition is skewed to basic and acidic residues over residues 52-73 (RKRD…ADQP) and 119-141 (GREF…ERGW). A Phosphothreonine modification is found at threonine 160. Position 162 is a phosphoserine (serine 162). Threonine 166 is modified (phosphothreonine). 2 stretches are compositionally biased toward basic and acidic residues: residues 172-186 (ENVK…ERKS) and 194-209 (TVEK…KSAP). Residues 214 to 224 (ASLKKSASQKK) show a composition bias toward low complexity. Positions 226-237 (AAKESKPKKVLL) are enriched in basic and acidic residues. Residues 245-254 (ARPARGGRPN) are compositionally biased toward low complexity. Residues 263 to 277 (ETASKTQQAPPTLSE) are compositionally biased toward polar residues.

The protein belongs to the STM1 family. Associates with mature 80S ribosomes. Binds to the head domain of the 40S ribosomal subunit and prevents mRNA binding by inserting its alpha-helix domain towards the mRNA entry tunnel at the decoding site, where it blocks the binding of tRNA and mRNA at the A- and P-sites. Interacts with eEF2; interaction sequesters eEF2 at the A-site of the ribosome, thereby blocking the interaction sites of the mRNA-tRNA complex, promoting ribosome stabilization and hibernation. Interacts with sad1. Phosphorylation by TORC1 upon nutrient replenishment inhibits STM1 and causes its release from dormant ribosomes.

The protein localises to the cytoplasm. In terms of biological role, ribosome preservation factor that protect a small pool of nontranslating, vacant ribosomes in cells under nutrient starvation conditions. Under nutrient-limiting conditions, cells reduce ribosome biogenesis and degrade ribosomes via autophagy (ribophagy) or proteasomal degradation. To avoid excessive degradation during starvation, STM1 binds to and protects 80S ribosomes from proteasomal degradation. Under nutrient-sufficient conditions, TORC1 phosphorylates and inhibits STM1 to prevent formation of dormant 80S ribosomes. Acts as an inhibitor of mRNA translation by promoting ribosome hibernation: clamps the two ribosomal subunits, thereby preventing their dissociation, and inhibits translation by excluding mRNA-binding. Acts via its association with eEF2, promoting ribosome stabilization and storage in an inactive state. May also repress translation by preventing association of eEF3 with ribosomes. Binds specifically G4 quadruplex (these are four-stranded right-handed helices, stabilized by guanine base quartets) and purine motif triplex (characterized by a third, antiparallel purine-rich DNA strand located within the major groove of a homopurine stretch of duplex DNA) nucleic acid structures. These structures may be present at telomeres or in rRNAs. Extends chronological lifespan when overexpressed. The sequence is that of Ribosome-associated protein oga1 from Schizosaccharomyces pombe (strain 972 / ATCC 24843) (Fission yeast).